We begin with the raw amino-acid sequence, 156 residues long: Ribosomal RNA large subunit methyltransferase H (156 aa).

Residues L73, G104, and 123–128 (ISSMTL) contribute to the S-adenosyl-L-methionine site.

It belongs to the RNA methyltransferase RlmH family. As to quaternary structure, homodimer.

It is found in the cytoplasm. It catalyses the reaction pseudouridine(1915) in 23S rRNA + S-adenosyl-L-methionine = N(3)-methylpseudouridine(1915) in 23S rRNA + S-adenosyl-L-homocysteine + H(+). Functionally, specifically methylates the pseudouridine at position 1915 (m3Psi1915) in 23S rRNA. The polypeptide is Ribosomal RNA large subunit methyltransferase H (Janthinobacterium sp. (strain Marseille) (Minibacterium massiliensis)).